The chain runs to 565 residues: Glucose-6-phosphate isomerase (565 aa).

The active-site Proton donor is glutamate 373. Residues histidine 404 and lysine 530 contribute to the active site.

It belongs to the GPI family.

It is found in the cytoplasm. It catalyses the reaction alpha-D-glucose 6-phosphate = beta-D-fructose 6-phosphate. It participates in carbohydrate biosynthesis; gluconeogenesis. Its pathway is carbohydrate degradation; glycolysis; D-glyceraldehyde 3-phosphate and glycerone phosphate from D-glucose: step 2/4. Its function is as follows. Catalyzes the reversible isomerization of glucose-6-phosphate to fructose-6-phosphate. The chain is Glucose-6-phosphate isomerase from Corynebacterium jeikeium (strain K411).